The chain runs to 90 residues: MARVTVQDAVEKVGNRFDLILTAARRARELQLHKREPLVPEDNDKPTVIALREIEKGLINNDIMNAHERREALEQETAELNTISLLYQNN.

The protein belongs to the RNA polymerase subunit omega family. The RNAP catalytic core consists of 2 alpha, 1 beta, 1 beta' and 1 omega subunit. When a sigma factor is associated with the core the holoenzyme is formed, which can initiate transcription.

It carries out the reaction RNA(n) + a ribonucleoside 5'-triphosphate = RNA(n+1) + diphosphate. Its function is as follows. Promotes RNA polymerase assembly. Latches the N- and C-terminal regions of the beta' subunit thereby facilitating its interaction with the beta and alpha subunits. In Histophilus somni (strain 129Pt) (Haemophilus somnus), this protein is DNA-directed RNA polymerase subunit omega.